Here is a 204-residue protein sequence, read N- to C-terminus: Putative peptidase PfaP (204 aa).

Residues 1–27 (MRLRKTRKIVVSMKDMAASGGYYIASS) form the signal peptide. The active-site Nucleophile is the Ser19. The active-site Proton donor/acceptor is the Lys70.

This sequence belongs to the peptidase S49 family.

Possible protease. May be involved in export of periplasmic flagella proteins. This is Putative peptidase PfaP (pfaP) from Leptospira borgpetersenii.